The following is a 160-amino-acid chain: uncharacterized protein (160 aa).

Tyrosine 49 bears the Phosphotyrosine mark.

Functionally, may be involved in the assembly, structure, or function of the flagellum. May polymerize to form a filamentous structure that is part of the flagellum. This is an uncharacterized protein from Bacillus subtilis (strain 168).